A 237-amino-acid chain; its full sequence is Sugar fermentation stimulation protein homolog (237 aa).

Belongs to the SfsA family.

This Actinobacillus pleuropneumoniae serotype 5b (strain L20) protein is Sugar fermentation stimulation protein homolog.